The following is a 92-amino-acid chain: Cell division protein FtsB (92 aa).

The Cytoplasmic segment spans residues 1-3 (MRL). A helical transmembrane segment spans residues 4-21 (FIFLLVAVLLLFQYDFWF). Residues 22-92 (GKNGYLDYKR…IFYHIVKEQK (71 aa)) are Periplasmic-facing. A coiled-coil region spans residues 26 to 74 (YLDYKRTAQQIAQHKQENEKLSQRNQVVAAEIKDLKQGVEAIEERARFQ).

The protein belongs to the FtsB family. Part of a complex composed of FtsB, FtsL and FtsQ.

The protein resides in the cell inner membrane. Essential cell division protein. May link together the upstream cell division proteins, which are predominantly cytoplasmic, with the downstream cell division proteins, which are predominantly periplasmic. The sequence is that of Cell division protein FtsB from Pasteurella multocida (strain Pm70).